We begin with the raw amino-acid sequence, 107 residues long: Glutaredoxin 4 (107 aa).

Residues isoleucine 4–serine 106 enclose the Glutaredoxin domain. A glutathione-binding site is contributed by lysine 21. Cysteine 29 lines the [2Fe-2S] cluster pocket. Residues arginine 58, phenylalanine 70, and cysteine 83–serine 84 each bind glutathione.

Belongs to the glutaredoxin family. Monothiol subfamily. As to quaternary structure, homodimer.

The protein localises to the cytoplasm. Monothiol glutaredoxin involved in the biogenesis of iron-sulfur clusters. The protein is Glutaredoxin 4 (grxD) of Buchnera aphidicola subsp. Schizaphis graminum (strain Sg).